Consider the following 274-residue polypeptide: Aspartate/glutamate leucyltransferase (274 aa).

Belongs to the R-transferase family. Bpt subfamily.

The protein localises to the cytoplasm. It catalyses the reaction N-terminal L-glutamyl-[protein] + L-leucyl-tRNA(Leu) = N-terminal L-leucyl-L-glutamyl-[protein] + tRNA(Leu) + H(+). The enzyme catalyses N-terminal L-aspartyl-[protein] + L-leucyl-tRNA(Leu) = N-terminal L-leucyl-L-aspartyl-[protein] + tRNA(Leu) + H(+). In terms of biological role, functions in the N-end rule pathway of protein degradation where it conjugates Leu from its aminoacyl-tRNA to the N-termini of proteins containing an N-terminal aspartate or glutamate. In Ruegeria sp. (strain TM1040) (Silicibacter sp.), this protein is Aspartate/glutamate leucyltransferase.